A 521-amino-acid chain; its full sequence is Bifunctional purine biosynthesis protein PurH (521 aa).

An MGS-like domain is found at 1 to 147; that stretch reads MAKISRALIS…KNNADVTVLV (147 aa).

This sequence belongs to the PurH family.

The enzyme catalyses (6R)-10-formyltetrahydrofolate + 5-amino-1-(5-phospho-beta-D-ribosyl)imidazole-4-carboxamide = 5-formamido-1-(5-phospho-D-ribosyl)imidazole-4-carboxamide + (6S)-5,6,7,8-tetrahydrofolate. It catalyses the reaction IMP + H2O = 5-formamido-1-(5-phospho-D-ribosyl)imidazole-4-carboxamide. Its pathway is purine metabolism; IMP biosynthesis via de novo pathway; 5-formamido-1-(5-phospho-D-ribosyl)imidazole-4-carboxamide from 5-amino-1-(5-phospho-D-ribosyl)imidazole-4-carboxamide (10-formyl THF route): step 1/1. The protein operates within purine metabolism; IMP biosynthesis via de novo pathway; IMP from 5-formamido-1-(5-phospho-D-ribosyl)imidazole-4-carboxamide: step 1/1. This is Bifunctional purine biosynthesis protein PurH from Geotalea daltonii (strain DSM 22248 / JCM 15807 / FRC-32) (Geobacter daltonii).